Consider the following 631-residue polypeptide: Probable G-protein coupled receptor 153 (631 aa).

Over methionine 1–alanine 11 the chain is Extracellular. Residues valine 12–valine 32 traverse the membrane as a helical segment. Residues glycine 33–proline 41 are Cytoplasmic-facing. The helical transmembrane segment at leucine 42 to alanine 62 threads the bilayer. The Extracellular segment spans residues threonine 63 to lysine 84. The chain crosses the membrane as a helical span at residues valine 85 to serine 105. Residues tyrosine 106–glutamine 126 lie on the Cytoplasmic side of the membrane. Residues alanine 127 to valine 147 traverse the membrane as a helical segment. Residues glycine 148 to arginine 162 are Extracellular-facing. Residues phenylalanine 163–serine 183 form a helical membrane-spanning segment. The Cytoplasmic segment spans residues valine 184–threonine 243. Residues glycine 244–valine 264 form a helical membrane-spanning segment. Topologically, residues serine 265–proline 276 are extracellular. A helical membrane pass occupies residues tryptophan 277–leucine 297. Over tryptophan 298–serine 631 the chain is Cytoplasmic. 3 disordered regions span residues leucine 486 to serine 518, glutamine 546 to alanine 590, and cysteine 603 to serine 631. Residues serine 605 to serine 617 show a composition bias toward low complexity.

Belongs to the G-protein coupled receptor 1 family.

It localises to the cell membrane. Functionally, orphan receptor. This Mus musculus (Mouse) protein is Probable G-protein coupled receptor 153 (Gpr153).